A 385-amino-acid polypeptide reads, in one-letter code: Glucans biosynthesis protein C (385 aa).

10 consecutive transmembrane segments (helical) span residues 17 to 37, 60 to 80, 91 to 111, 137 to 157, 173 to 193, 212 to 232, 239 to 259, 274 to 294, 311 to 331, and 338 to 358; these read AWLM…SHTW, MQVF…RYPL, VGIP…IMLQ, ISHL…VWIF, KFSM…YAVI, FIVM…LAFI, LFTT…VAYL, TESV…FSFG, ASLF…AYIT, and WLGF…LYEI.

The protein belongs to the acyltransferase 3 family. OpgC subfamily.

The protein localises to the cell membrane. Its pathway is glycan metabolism; osmoregulated periplasmic glucan (OPG) biosynthesis. In terms of biological role, necessary for the succinyl substitution of periplasmic glucans. Could catalyze the transfer of succinyl residues from the cytoplasmic side of the membrane to the nascent glucan backbones on the periplasmic side of the membrane. The polypeptide is Glucans biosynthesis protein C (Escherichia coli (strain K12 / MC4100 / BW2952)).